The following is a 125-amino-acid chain: Fluoride-specific ion channel FluC (125 aa).

4 consecutive transmembrane segments (helical) span residues 1–21, 34–54, 72–92, and 101–121; these read MFATFGFIALFAVLGAWARYG, FPWATLSINVLGCFLMGFLFF, TGGLGAYTTFSTFSLETLVLF, and LLYMFTSLFLCVGAAFAGAWI. 2 residues coordinate Na(+): Gly-76 and Thr-79.

This sequence belongs to the fluoride channel Fluc/FEX (TC 1.A.43) family.

The protein localises to the cell inner membrane. It carries out the reaction fluoride(in) = fluoride(out). Its activity is regulated as follows. Na(+) is not transported, but it plays an essential structural role and its presence is essential for fluoride channel function. Functionally, fluoride-specific ion channel. Important for reducing fluoride concentration in the cell, thus reducing its toxicity. This Acidithiobacillus ferrooxidans (strain ATCC 23270 / DSM 14882 / CIP 104768 / NCIMB 8455) (Ferrobacillus ferrooxidans (strain ATCC 23270)) protein is Fluoride-specific ion channel FluC.